An 85-amino-acid chain; its full sequence is Cell division topological specificity factor (85 aa).

The protein belongs to the MinE family.

Functionally, prevents the cell division inhibition by proteins MinC and MinD at internal division sites while permitting inhibition at polar sites. This ensures cell division at the proper site by restricting the formation of a division septum at the midpoint of the long axis of the cell. This chain is Cell division topological specificity factor, found in Deinococcus geothermalis (strain DSM 11300 / CIP 105573 / AG-3a).